The chain runs to 134 residues: Small ribosomal subunit protein uS9c (134 aa).

Belongs to the universal ribosomal protein uS9 family.

The protein resides in the plastid. Its subcellular location is the chloroplast. The polypeptide is Small ribosomal subunit protein uS9c (rps9) (Guillardia theta (Cryptophyte)).